Consider the following 400-residue polypeptide: Dual specificity mitogen-activated protein kinase kinase 2 (400 aa).

Met-1 is modified (N-acetylmethionine). Ser-23 is modified (phosphoserine). A Protein kinase domain is found at 72–369 (FERISELGAG…LKMLTNHTFI (298 aa)). ATP is bound by residues 78–86 (LGAGNGGVV) and Lys-101. Asp-194 (proton acceptor) is an active-site residue. (Microbial infection) O-acetylserine; by Yersinia YopJ; alternate is present on residues Ser-222 and Ser-226. Ser-222 carries the phosphoserine; by RAF; alternate modification. Ser-226 is modified (phosphoserine; alternate). The segment at 286-310 (GEEGEPHSISPRPRPPGRPVSGHGM) is disordered. A phosphoserine mark is found at Ser-293, Ser-295, and Ser-306. A phosphothreonine mark is found at Thr-394 and Thr-396.

It belongs to the protein kinase superfamily. STE Ser/Thr protein kinase family. MAP kinase kinase subfamily. In terms of assembly, interacts with MORG1. Interacts with SGK1. Interacts with KSR1. Interacts with KSR1 and BRAF; the interaction with KSR1 mediates KSR1-BRAF dimerization. Interacts with GLS. The cofactor is Mg(2+). MAPKK is itself dependent on Ser/Thr phosphorylation for activity catalyzed by MAP kinase kinase kinases (RAF or MEKK1). Phosphorylated by MAP2K1/MEK1. Post-translationally, (Microbial infection) Acetylation of Ser-222 and Ser-226 by Yersinia YopJ prevents phosphorylation and activation, thus blocking the MAPK signaling pathway.

It localises to the cytoplasm. Its subcellular location is the membrane. It catalyses the reaction L-seryl-[protein] + ATP = O-phospho-L-seryl-[protein] + ADP + H(+). The catalysed reaction is L-threonyl-[protein] + ATP = O-phospho-L-threonyl-[protein] + ADP + H(+). It carries out the reaction L-tyrosyl-[protein] + ATP = O-phospho-L-tyrosyl-[protein] + ADP + H(+). In terms of biological role, catalyzes the concomitant phosphorylation of a threonine and a tyrosine residue in a Thr-Glu-Tyr sequence located in MAP kinases. Activates the ERK1 and ERK2 MAP kinases. Activates BRAF in a KSR1 or KSR2-dependent manner; by binding to KSR1 or KSR2 releases the inhibitory intramolecular interaction between KSR1 or KSR2 protein kinase and N-terminal domains which promotes KSR1 or KSR2-BRAF dimerization and BRAF activation. The polypeptide is Dual specificity mitogen-activated protein kinase kinase 2 (MAP2K2) (Homo sapiens (Human)).